Here is a 231-residue protein sequence, read N- to C-terminus: Uridylate kinase (231 aa).

Lysine 6–glycine 9 provides a ligand contact to ATP. Residues glycine 14 to glycine 19 are involved in allosteric activation by GTP. Glycine 49 and arginine 53 together coordinate ATP. Residues aspartate 66 and threonine 127–threonine 134 each bind UMP. The ATP site is built by threonine 154, tyrosine 160, and aspartate 163.

This sequence belongs to the UMP kinase family. Homohexamer.

The protein resides in the cytoplasm. The enzyme catalyses UMP + ATP = UDP + ADP. It functions in the pathway pyrimidine metabolism; CTP biosynthesis via de novo pathway; UDP from UMP (UMPK route): step 1/1. With respect to regulation, allosterically activated by GTP. Inhibited by UTP. In terms of biological role, catalyzes the reversible phosphorylation of UMP to UDP. This Thermotoga maritima (strain ATCC 43589 / DSM 3109 / JCM 10099 / NBRC 100826 / MSB8) protein is Uridylate kinase.